Consider the following 149-residue polypeptide: Urease accessory protein UreE (149 aa).

It belongs to the UreE family.

It localises to the cytoplasm. Functionally, involved in urease metallocenter assembly. Binds nickel. Probably functions as a nickel donor during metallocenter assembly. This chain is Urease accessory protein UreE, found in Prochlorococcus marinus (strain AS9601).